Reading from the N-terminus, the 216-residue chain is Glycerol-3-phosphate acyltransferase (216 aa).

Transmembrane regions (helical) follow at residues 4 to 24, 71 to 91, 113 to 133, 144 to 164, and 165 to 185; these read TIIGLILAYLLGSIPTGLWIG, LPFFLHIEGVSPLVFGLLAVI, VVLGFSPAFFVYLIVIFASIL, VLSAVIAILSALLFPLVGFIL, and PSYDLFFTLIIIALALIIILR.

Belongs to the PlsY family. As to quaternary structure, probably interacts with PlsX.

It is found in the cell membrane. The enzyme catalyses an acyl phosphate + sn-glycerol 3-phosphate = a 1-acyl-sn-glycero-3-phosphate + phosphate. The protein operates within lipid metabolism; phospholipid metabolism. Functionally, catalyzes the transfer of an acyl group from acyl-phosphate (acyl-PO(4)) to glycerol-3-phosphate (G3P) to form lysophosphatidic acid (LPA). This enzyme utilizes acyl-phosphate as fatty acyl donor, but not acyl-CoA or acyl-ACP. The chain is Glycerol-3-phosphate acyltransferase from Streptococcus sanguinis (strain SK36).